The primary structure comprises 156 residues: Small ribosomal subunit protein uS7 (156 aa).

It belongs to the universal ribosomal protein uS7 family. As to quaternary structure, part of the 30S ribosomal subunit. Contacts proteins S9 and S11.

Functionally, one of the primary rRNA binding proteins, it binds directly to 16S rRNA where it nucleates assembly of the head domain of the 30S subunit. Is located at the subunit interface close to the decoding center, probably blocks exit of the E-site tRNA. This chain is Small ribosomal subunit protein uS7, found in Micrococcus luteus (strain ATCC 4698 / DSM 20030 / JCM 1464 / CCM 169 / CCUG 5858 / IAM 1056 / NBRC 3333 / NCIMB 9278 / NCTC 2665 / VKM Ac-2230) (Micrococcus lysodeikticus).